The chain runs to 157 residues: Transcription elongation factor GreA (157 aa).

Positions 47–75 (SGEYEDAKKAQALLEGRIRELKHLLSRAE) form a coiled coil.

The protein belongs to the GreA/GreB family.

In terms of biological role, necessary for efficient RNA polymerase transcription elongation past template-encoded arresting sites. The arresting sites in DNA have the property of trapping a certain fraction of elongating RNA polymerases that pass through, resulting in locked ternary complexes. Cleavage of the nascent transcript by cleavage factors such as GreA or GreB allows the resumption of elongation from the new 3'terminus. GreA releases sequences of 2 to 3 nucleotides. The sequence is that of Transcription elongation factor GreA from Chloroflexus aggregans (strain MD-66 / DSM 9485).